The primary structure comprises 132 residues: Small ribosomal subunit protein uS8 (132 aa).

It belongs to the universal ribosomal protein uS8 family. Part of the 30S ribosomal subunit. Contacts proteins S5 and S12.

Its function is as follows. One of the primary rRNA binding proteins, it binds directly to 16S rRNA central domain where it helps coordinate assembly of the platform of the 30S subunit. In Streptococcus thermophilus (strain CNRZ 1066), this protein is Small ribosomal subunit protein uS8.